The primary structure comprises 512 residues: Extracellular serine/threonine protein kinase CeFam20 (512 aa).

The Cytoplasmic segment spans residues 1-6 (MRCNIK). A helical; Signal-anchor for type II membrane protein transmembrane segment spans residues 7 to 26 (RLFTLAIGVFAATLVIISFS). The Lumenal segment spans residues 27 to 512 (KDNYEREWKQ…QDKKDDKKTV (486 aa)). The cysteines at positions 110 and 144 are disulfide-linked. An N-linked (GlcNAc...) asparagine glycan is attached at N113. Q176, K192, and E213 together coordinate ATP. E213 lines the Mn(2+) pocket. N242 is a glycosylation site (N-linked (GlcNAc...) asparagine). Intrachain disulfides connect C268-C284 and C273-C277. Residue 295-298 (QVFL) coordinates ATP. 2 disulfides stabilise this stretch: C333–C409 and C410–C469. D366 is an active-site residue. ATP contacts are provided by E371 and D387. D387 contacts Mn(2+). The interval 486–512 (PDVSDAEQNDEEQSEEHQDKKDDKKTV) is disordered. Acidic residues predominate over residues 489–499 (SDAEQNDEEQS). Residues 500-512 (EEHQDKKDDKKTV) are compositionally biased toward basic and acidic residues.

Belongs to the FAM20 family. It depends on Mn(2+) as a cofactor.

It localises to the golgi apparatus membrane. Its subcellular location is the secreted. It carries out the reaction L-seryl-[protein] + ATP = O-phospho-L-seryl-[protein] + ADP + H(+). The enzyme catalyses L-threonyl-[protein] + ATP = O-phospho-L-threonyl-[protein] + ADP + H(+). In terms of biological role, golgi serine/threonine protein kinase that phosphorylates secretory pathway proteins within Ser-x-Glu/pSer motifs. The sequence is that of Extracellular serine/threonine protein kinase CeFam20 from Caenorhabditis elegans.